The primary structure comprises 155 residues: Leader peptidase HopD (155 aa).

The protein belongs to the peptidase A24 family.

This Salmonella typhimurium (strain LT2 / SGSC1412 / ATCC 700720) protein is Leader peptidase HopD (hopD).